The following is a 100-amino-acid chain: Tachykinin-4 (100 aa).

The first 19 residues, 1 to 19 (MPSSVTLLLLMGLSVCTSA), serve as a signal peptide directing secretion. 2 propeptides span residues 20–55 (EDGG…LQEV) and 85–100 (RASS…QGAE). The interval 80-100 (GLLGRRASSTKGSVDEDQGAE) is disordered.

It belongs to the tachykinin family.

The protein localises to the secreted. In terms of biological role, tachykinins are active peptides which excite neurons, evoke behavioral responses, are potent vasodilators and secretagogues, and contract (directly or indirectly) many smooth muscles. The protein is Tachykinin-4 of Oryctolagus cuniculus (Rabbit).